Reading from the N-terminus, the 182-residue chain is Peptide deformylase (182 aa).

Residues cysteine 100 and histidine 142 each coordinate Fe cation. Glutamate 143 is an active-site residue. Histidine 146 lines the Fe cation pocket.

This sequence belongs to the polypeptide deformylase family. The cofactor is Fe(2+).

The enzyme catalyses N-terminal N-formyl-L-methionyl-[peptide] + H2O = N-terminal L-methionyl-[peptide] + formate. Its function is as follows. Removes the formyl group from the N-terminal Met of newly synthesized proteins. Requires at least a dipeptide for an efficient rate of reaction. N-terminal L-methionine is a prerequisite for activity but the enzyme has broad specificity at other positions. The protein is Peptide deformylase of Bartonella bacilliformis (strain ATCC 35685 / KC583 / Herrer 020/F12,63).